Here is a 239-residue protein sequence, read N- to C-terminus: MNEDIKNNLNNSDEFNGKIIVGLDEAGRGPVIGPMVIASVKINENDLPKLHDLGLKDSKQLTKKKREELYIKISEICDVKKIVIDPEKIDEQMEIINLNKIELGAFSKLANHFIKENENISIYIDACSSNEQSFSNQFKAKLINKNVEIIAEHKADENYKIVSAASIIAKVTRDNVIEEYKEIFGEIGSGYPSDPKTKKFLKNYVHENKGLPKIARKSWATSKNLLKEIEESKIFQWVK.

An RNase H type-2 domain is found at 18 to 231; sequence KIIVGLDEAG…SKNLLKEIEE (214 aa). Positions 24, 25, and 125 each coordinate a divalent metal cation.

This sequence belongs to the RNase HII family. It depends on Mn(2+) as a cofactor. Requires Mg(2+) as cofactor.

Its subcellular location is the cytoplasm. It carries out the reaction Endonucleolytic cleavage to 5'-phosphomonoester.. In terms of biological role, endonuclease that specifically degrades the RNA of RNA-DNA hybrids. This is Ribonuclease HII from Methanococcus maripaludis (strain C7 / ATCC BAA-1331).